Reading from the N-terminus, the 485-residue chain is Acyltransferase cm3D (485 aa).

His169 acts as the Proton acceptor in catalysis.

It belongs to the plant acyltransferase family. Monomer.

It participates in secondary metabolite biosynthesis. Its function is as follows. Acyltransferase; part of the gene cluster that mediates the biosynthesis of beauveriolides I and III, cyclodepsipeptides acting as inhibitors of the acyl-CoA:cholesterol acyltransferase. The HR-PKS cm3B initiates the biosynthesis of beauveriolides by iteratively catalyzing the formation of the linear polyketide chain. The ATP-dependent acetyl-CoA ligase cm3D converts the polyketide carboxylic acid to a CoA thioester which id shuttled to the first T domain in the NRPS cm3A by the acetyltransferase cm3C. Cm3A contains 13 domains and assembles the polyketide chain, L-phenylalanine, L-alanine, and D-leucine (or D-allo-isoleucine) to form beauveriolide I (or beauveriolide III). The production of both beauveriolides I and III suggests the substrate adaptability of cm3B, using different amino acids as substrates. The chain is Acyltransferase cm3D from Cordyceps militaris (strain CM01) (Caterpillar fungus).